The following is a 395-amino-acid chain: Chorismate synthase (395 aa).

The NADP(+) site is built by Arg40 and Arg46. Residues Arg135–Ser137 and Gln256–Ala257 contribute to the FMN site. Over residues Arg272–Pro283 the composition is skewed to basic and acidic residues. A disordered region spans residues Arg272–Gly296. FMN-binding positions include Gly300, Lys315–Thr319, and Arg341.

It belongs to the chorismate synthase family. Homotetramer. The cofactor is FMNH2.

It carries out the reaction 5-O-(1-carboxyvinyl)-3-phosphoshikimate = chorismate + phosphate. The protein operates within metabolic intermediate biosynthesis; chorismate biosynthesis; chorismate from D-erythrose 4-phosphate and phosphoenolpyruvate: step 7/7. Its function is as follows. Catalyzes the anti-1,4-elimination of the C-3 phosphate and the C-6 proR hydrogen from 5-enolpyruvylshikimate-3-phosphate (EPSP) to yield chorismate, which is the branch point compound that serves as the starting substrate for the three terminal pathways of aromatic amino acid biosynthesis. This reaction introduces a second double bond into the aromatic ring system. The protein is Chorismate synthase of Rhodococcus opacus (strain B4).